We begin with the raw amino-acid sequence, 328 residues long: MKENFWSELPRPFFILAPMEDVTDIVFRHVVSEAARPDVFFTEFTNTESFCHPEGIHSVRGRLTFSEDEQPMVAHIWGDKPEQFRETSIQLAKMGFKGIDLNMGCPVANVAKKGKGSGLILRPDVAAEIIQATKAGGLPVSVKTRLGYYEIDEWKDWLKHVFEQDIANLSIHLRTRKEMSKVDAHWELIEAIKNLRDEIAPNTLLTINGDIPDRKTGLELAEKYGIDGVMIGRGIFHNPFAFEKEPREHTCKELLDLLRLHLSLFNKYEKDEIRQFKSLRRFFKIYVRGIRGASELRHQLMNTQSIAEARALLDEFEAQMDEDVKLEL.

18-20 (PME) serves as a coordination point for FMN. Cysteine 105 functions as the Proton donor in the catalytic mechanism. Residues lysine 143, 208-210 (NGD), and 232-233 (GR) contribute to the FMN site.

This sequence belongs to the Dus family. The cofactor is FMN.

The enzyme catalyses a 5,6-dihydrouridine in tRNA + NAD(+) = a uridine in tRNA + NADH + H(+). It catalyses the reaction a 5,6-dihydrouridine in tRNA + NADP(+) = a uridine in tRNA + NADPH + H(+). Catalyzes the synthesis of 5,6-dihydrouridine (D), a modified base found in the D-loop of most tRNAs, via the reduction of the C5-C6 double bond in target uridines. The sequence is that of Probable tRNA-dihydrouridine synthase (dus) from Staphylococcus aureus (strain MRSA252).